The sequence spans 326 residues: MMSSRTRKIYLFVFMFISTSLQLMNGEAKAEPETFRQFLYNKQKGTVLGRTGTSWCQITVFYIIFYIFLSAFFIGCLAIFLKTLDPKVPRFYGKGTIIGVNPGVGYQPWLKENPDSTLIKFNLQDSKSWEPYVKQLDGYFSRYNNTNDTRECGAEDSNEALQTDPDSLPCRFDLGLFEKANCGAKDQYGFKSGKPCVVVSLNRLIGWRPVDYDGNSVPEEIKSRYKSGSITINCEGATPFDKEHLGKVKYIPEAGIDGRYYPYVFLPSYQQPIAMVKFDTIPRNKLVIVECRAYASNIEHDVSTRIGMVYFELFVEDKKPVAAPAA.

Residues 1-59 (MMSSRTRKIYLFVFMFISTSLQLMNGEAKAEPETFRQFLYNKQKGTVLGRTGTSWCQIT) are Cytoplasmic-facing. Residues 60 to 80 (VFYIIFYIFLSAFFIGCLAIF) traverse the membrane as a helical; Signal-anchor for type II membrane protein segment. Residues 81–326 (LKTLDPKVPR…DKKPVAAPAA (246 aa)) are Lumenal-facing. Asparagine 144 and asparagine 147 each carry an N-linked (GlcNAc...) asparagine glycan. Cysteine 234 and cysteine 291 are joined by a disulfide.

Belongs to the X(+)/potassium ATPases subunit beta family. In terms of assembly, the sodium/potassium-transporting ATPase is composed of a catalytic alpha subunit, an auxiliary non-catalytic beta subunit and an additional regulatory subunit.

Its subcellular location is the cell membrane. This is the non-catalytic component of the active enzyme, which catalyzes the hydrolysis of ATP coupled with the exchange of Na(+) and K(+) ions across the plasma membrane. The beta subunit regulates, through assembly of alpha/beta heterodimers, the number of sodium pumps transported to the plasma membrane. Implicated in genomic response to various soil bacteria that affects fitness, lifespan and brood size. This Caenorhabditis briggsae protein is Probable sodium/potassium-transporting ATPase subunit beta-3 (nkb-3).